Consider the following 102-residue polypeptide: MKIAVLGDKDTALGFKLAGAHEVYSFEDTPLDMERLKNKLNELVEREDIGIILITERFVQKIGLPDVTFPIILQVPDKSGSKFGEEAIKEIVRRAIGVELKR.

This sequence belongs to the V-ATPase F subunit family. As to quaternary structure, has multiple subunits with at least A(3), B(3), C, D, E, F, H, I and proteolipid K(x).

The protein resides in the cell membrane. Functionally, component of the A-type ATP synthase that produces ATP from ADP in the presence of a proton gradient across the membrane. In Thermococcus onnurineus (strain NA1), this protein is A-type ATP synthase subunit F.